A 241-amino-acid chain; its full sequence is C-type lectin domain family 9 member A (241 aa).

At 1–34 (MHEEEIYTSLQWDIPTSEASQKCPSLSKCPGTWC) the chain is on the cytoplasmic side. The short motif at 5–10 (EIYTSL) is the ITAM-like element. Residues 35–55 (IVTVISCVVCVGLLAASIFLG) form a helical; Signal-anchor for type II membrane protein membrane-spanning segment. At 56–241 (IKFSQVSSLV…CEKKAFGSCI (186 aa)) the chain is on the extracellular side. N-linked (GlcNAc...) asparagine glycosylation is found at Asn81 and Asn88. A disulfide bond links Cys113 and Cys124. In terms of domain architecture, C-type lectin spans 120 to 233 (NGKSCYYAFD…CSNWKYFICE (114 aa)). Residues Asn135, Asn161, and Asn223 are each glycosylated (N-linked (GlcNAc...) asparagine). 2 disulfides stabilise this stretch: Cys141-Cys232 and Cys211-Cys224.

As to quaternary structure, homodimer. N-glycosylated. In terms of tissue distribution, high expression in the spleen, moderate to low levels in several other tissues and cell types, but no detectable expression in skin dendritic cells or CD4(+) T-cells.

The protein localises to the membrane. Functionally, functions as an endocytic receptor on a small subset of myeloid cells specialized for the uptake and processing of material from dead cells. Recognizes filamentous form of actin in association with particular actin-binding domains of cytoskeletal proteins, including spectrin, exposed when cell membranes are damaged, and mediate the cross-presentation of dead-cell associated antigens in a Syk-dependent manner. In Rattus norvegicus (Rat), this protein is C-type lectin domain family 9 member A (Clec9a).